Consider the following 241-residue polypeptide: Carboxy-S-adenosyl-L-methionine synthase (241 aa).

S-adenosyl-L-methionine-binding positions include Y38, 63-65 (GCS), 88-89 (DN), 116-117 (DI), N131, and R198.

The protein belongs to the class I-like SAM-binding methyltransferase superfamily. Cx-SAM synthase family. As to quaternary structure, homodimer.

The catalysed reaction is prephenate + S-adenosyl-L-methionine = carboxy-S-adenosyl-L-methionine + 3-phenylpyruvate + H2O. Its function is as follows. Catalyzes the conversion of S-adenosyl-L-methionine (SAM) to carboxy-S-adenosyl-L-methionine (Cx-SAM). The protein is Carboxy-S-adenosyl-L-methionine synthase of Mannheimia succiniciproducens (strain KCTC 0769BP / MBEL55E).